The primary structure comprises 226 residues: 2-C-methyl-D-erythritol 4-phosphate cytidylyltransferase (226 aa).

It belongs to the IspD/TarI cytidylyltransferase family. IspD subfamily.

The enzyme catalyses 2-C-methyl-D-erythritol 4-phosphate + CTP + H(+) = 4-CDP-2-C-methyl-D-erythritol + diphosphate. The protein operates within isoprenoid biosynthesis; isopentenyl diphosphate biosynthesis via DXP pathway; isopentenyl diphosphate from 1-deoxy-D-xylulose 5-phosphate: step 2/6. Functionally, catalyzes the formation of 4-diphosphocytidyl-2-C-methyl-D-erythritol from CTP and 2-C-methyl-D-erythritol 4-phosphate (MEP). This Actinobacillus pleuropneumoniae serotype 7 (strain AP76) protein is 2-C-methyl-D-erythritol 4-phosphate cytidylyltransferase.